We begin with the raw amino-acid sequence, 307 residues long: Barttin (307 aa).

The Cytoplasmic portion of the chain corresponds to 1-5 (MADEK). Residues 1–72 (MADEKTFRIG…VPADSDFQGI (72 aa)) are regulates channel membrane trafficking and anion conductance. Residues 6–26 (TFRIGFIVLGLFLLSLGTFLM) form a helical membrane-spanning segment. The Extracellular segment spans residues 27–32 (SHDRPQ). A helical transmembrane segment spans residues 33–53 (VYGTFYAMGSVMVIGGVIWSM). S-palmitoyl cysteine attachment occurs at residues cysteine 54 and cysteine 56. The Cytoplasmic portion of the chain corresponds to 54–307 (CQCYPKITFV…ELGFEPDIQG (254 aa)). Phosphoserine occurs at positions 79 and 107. Disordered regions lie at residues 135–154 (TGAS…WMEA) and 161–224 (GSDE…RGPL). Residues 161-171 (GSDENEGEKSH) are compositionally biased toward basic and acidic residues. A Phosphoserine modification is found at serine 162. Residues 172-183 (SQSSPSVGPQGS) show a composition bias toward low complexity. Positions 198–207 (SEGSSLQPSP) are enriched in polar residues. Serine 228 and serine 289 each carry phosphoserine. Residues 255 to 307 (RKQQWSLRMKGETVQARAEEPEQEEEDLYYGLPDSPGNPLPDKELGFEPDIQG) are disordered.

As to quaternary structure, interacts with CLCNK channels. Forms probably heteromers with CLCNKA in the thin ascending limb of Henle and with CLCNKB in the thick ascending limb and more distal segments. Post-translationally, palmitoylation is necessary for activation of plasma membrane-inserted CLC-K/barttin channels. As to expression, expression is evident in inner and outer stripes of the outer medulla of the kidney, most probably representing thin limbs of Henle's loop together with some collecting duct coursing through the outer stripe. In situ hybridization in fetal kidney at 18.5 dpc revealed a clear continuity between hybridization signals from the thin limb of Henle's loop and the distal convoluted tubule, suggesting that part of the expression pattern may result from expression in the thick ascending limb of Henle's loop. In addition, strong signals are present in a subset of cortical tubules, representing distal convoluted tubules or cortical collecting duct. Strong expression is also observed in the inner medulla of the kidney. This expression does not extend all the way to the tip of the papilla. Thus this signal most probably represents cells of the thin ascending limbs. In the inner ear, strong and exclusive expression is detected in marginal cells of the stria vascularis. In addition to cochlear signal, expression is observed in dark cells localized at the base of the crista ampullaris of the vestibular organ.

The protein localises to the basolateral cell membrane. Functionally, regulatory subunit of anion-selective CLCNKA:BSND and CLCNKB:BSND heteromeric channels involved in basolateral chloride conductance along the nephron to achieve urine concentration and maintain systemic acid-base homeostasis, and in the stria vascularis of the inner ear to establish the endocochlear potential necessary for normal hearing. Most likely acts as a chaperone that allosterically regulates proper sorting of CLCNKA:BSND and CLCNKB:BSND channels at the basolateral plasma membrane domain and functional switch to ion conducting state. Mediates constitutive opening of channel common gates. The sequence is that of Barttin from Mus musculus (Mouse).